The chain runs to 475 residues: ATP synthase subunit beta (475 aa).

Residue 156–163 coordinates ATP; the sequence is GGAGVGKT.

This sequence belongs to the ATPase alpha/beta chains family. In terms of assembly, F-type ATPases have 2 components, CF(1) - the catalytic core - and CF(0) - the membrane proton channel. CF(1) has five subunits: alpha(3), beta(3), gamma(1), delta(1), epsilon(1). CF(0) has three main subunits: a(1), b(2) and c(9-12). The alpha and beta chains form an alternating ring which encloses part of the gamma chain. CF(1) is attached to CF(0) by a central stalk formed by the gamma and epsilon chains, while a peripheral stalk is formed by the delta and b chains.

The protein localises to the cell membrane. It catalyses the reaction ATP + H2O + 4 H(+)(in) = ADP + phosphate + 5 H(+)(out). Functionally, produces ATP from ADP in the presence of a proton gradient across the membrane. The catalytic sites are hosted primarily by the beta subunits. The polypeptide is ATP synthase subunit beta (Mycoplasma pneumoniae (strain ATCC 29342 / M129 / Subtype 1) (Mycoplasmoides pneumoniae)).